The following is a 489-amino-acid chain: Adenylosuccinate synthetase 2, chloroplastic (489 aa).

The N-terminal 45 residues, 1-45, are a transit peptide targeting the chloroplast; sequence MPFSPPCLDPAAAAAASLSFLPAAAARPPAPCAVAPRSRRALRVA. GTP is bound by residues 76-82 and 104-106; these read GDEGKGK and GHT. The active-site Proton acceptor is Asp77. Mg(2+) contacts are provided by Asp77 and Gly104. IMP-binding positions include 77–80, 102–105, Thr194, Arg208, Gln288, Thr303, and Arg367; these read DEGK and NAGH. Residue His105 is the Proton donor of the active site. Residue 363–369 participates in substrate binding; sequence TTTGRPR. GTP contacts are provided by residues Arg369, 395–397, and 478–480; these read KLD and GVG.

This sequence belongs to the adenylosuccinate synthetase family. Homodimer. Requires Mg(2+) as cofactor.

It is found in the plastid. It localises to the chloroplast. It catalyses the reaction IMP + L-aspartate + GTP = N(6)-(1,2-dicarboxyethyl)-AMP + GDP + phosphate + 2 H(+). It functions in the pathway purine metabolism; AMP biosynthesis via de novo pathway; AMP from IMP: step 1/2. Functionally, plays an important role in the de novo pathway and in the salvage pathway of purine nucleotide biosynthesis. Catalyzes the first committed step in the biosynthesis of AMP from IMP. This chain is Adenylosuccinate synthetase 2, chloroplastic, found in Oryza sativa subsp. japonica (Rice).